We begin with the raw amino-acid sequence, 415 residues long: MERVWLLFLLAIRVSPGSAQFNSYNCDANLHSRFPAERDISVYCGVQAITMKINFCTVLFSGYSETDLALNGRHGDSHCRGFINNNTFPAVVIFIINLSTLEGCGNNLVVSTIPGVGASGNATTVQIGNISGYIDTPDPPAVISYLPGLLYKFSCSYPLEYLVNNTQLASSSAAISVRENNGTFVSTLNLLLYNDSTYREQLIIPSIGLPLKTKVFAAVQATNLDGRWNVLMDYCYTTPSGNPNDDTRYDLFLSCDKDPQTTVIENGRSQRGRFSFEVFRFVKHKNQKMSTVFLHCLTKLCRADDCPLLMPICGNRKRRDAQSWTTWAPQSTSGNAVLSAGPIITRSDETPTNNSQLGSLSVPPFQLNAVTSSLISGMVILGVLCFSLLLCSLALLHRKGSTSLVLNGVRNPVFE.

The N-terminal stretch at 1 to 19 (MERVWLLFLLAIRVSPGSA) is a signal peptide. The Extracellular segment spans residues 20-373 (QFNSYNCDAN…PFQLNAVTSS (354 aa)). Positions 43–320 (YCGVQAITMK…PICGNRKRRD (278 aa)) constitute a ZP domain. 2 cysteine pairs are disulfide-bonded: Cys-44–Cys-155 and Cys-79–Cys-104. Asn-164 carries N-linked (GlcNAc...) asparagine glycosylation. Disulfide bonds link Cys-235–Cys-296 and Cys-255–Cys-313. The helical transmembrane segment at 374 to 394 (LISGMVILGVLCFSLLLCSLA) threads the bilayer. Residues 395-415 (LLHRKGSTSLVLNGVRNPVFE) lie on the Cytoplasmic side of the membrane.

Post-translationally, proteolytically cleaved before the transmembrane segment to yield the secreted form found in the extracellular matrix of the cupula.

It localises to the cytoplasmic vesicle membrane. The protein resides in the secreted. It is found in the extracellular space. Its subcellular location is the extracellular matrix. In terms of biological role, glycoprotein which is a component of the gelatinous extracellular matrix in the cupulae of the vestibular organ. This is Zona pellucida-like domain-containing protein 1 (Zpld1) from Mus musculus (Mouse).